The primary structure comprises 106 residues: Iron-sulfur cluster assembly protein CyaY (106 aa).

The protein belongs to the frataxin family.

In terms of biological role, involved in iron-sulfur (Fe-S) cluster assembly. May act as a regulator of Fe-S biogenesis. In Shigella flexneri serotype 5b (strain 8401), this protein is Iron-sulfur cluster assembly protein CyaY.